The following is a 306-amino-acid chain: 4-diphosphocytidyl-2-C-methyl-D-erythritol kinase (306 aa).

The active site involves Lys-11. 113 to 123 (PPEGGIGGGSS) lines the ATP pocket. The active site involves Asp-153.

It belongs to the GHMP kinase family. IspE subfamily.

It catalyses the reaction 4-CDP-2-C-methyl-D-erythritol + ATP = 4-CDP-2-C-methyl-D-erythritol 2-phosphate + ADP + H(+). It functions in the pathway isoprenoid biosynthesis; isopentenyl diphosphate biosynthesis via DXP pathway; isopentenyl diphosphate from 1-deoxy-D-xylulose 5-phosphate: step 3/6. In terms of biological role, catalyzes the phosphorylation of the position 2 hydroxy group of 4-diphosphocytidyl-2C-methyl-D-erythritol. The sequence is that of 4-diphosphocytidyl-2-C-methyl-D-erythritol kinase from Leptospira biflexa serovar Patoc (strain Patoc 1 / ATCC 23582 / Paris).